The sequence spans 109 residues: Aquaporin-2 (109 aa).

Over Ser1–Lys6 the chain is Cytoplasmic. A helical transmembrane segment spans residues Ala7–Leu27. Residues Asn28–Ser35 are Extracellular-facing. Residues Gly36–Leu54 traverse the membrane as a helical segment. The Cytoplasmic segment spans residues Gly55 to Gly59. An intramembrane region (discontinuously helical) is located at residues Ala60 to Ala69. An NPA 1 motif is present at residues Asn63–Ala65. Topologically, residues Cys70–Arg80 are cytoplasmic. Residues Ala81–Leu102 traverse the membrane as a helical segment. The Extracellular portion of the chain corresponds to Thr103–Gly109.

It belongs to the MIP/aquaporin (TC 1.A.8) family. Homotetramer. Post-translationally, serine phosphorylation is necessary and sufficient for expression at the apical membrane. Endocytosis is not phosphorylation-dependent. N-glycosylated.

The protein localises to the apical cell membrane. The protein resides in the basolateral cell membrane. It is found in the cell membrane. Its subcellular location is the cytoplasmic vesicle membrane. It localises to the golgi apparatus. The protein localises to the trans-Golgi network membrane. It catalyses the reaction H2O(in) = H2O(out). The enzyme catalyses glycerol(in) = glycerol(out). Its function is as follows. Forms a water-specific channel that provides the plasma membranes of renal collecting duct with high permeability to water, thereby permitting water to move in the direction of an osmotic gradient. Plays an essential role in renal water homeostasis. Could also be permeable to glycerol. This Orycteropus afer (Aardvark) protein is Aquaporin-2.